The chain runs to 441 residues: Deoxyguanosinetriphosphate triphosphohydrolase-like protein 1 (441 aa).

Residues 62–255 (RLTHSLEAAQ…MELADDIAYG (194 aa)) form the HD domain.

The protein belongs to the dGTPase family. Type 2 subfamily.

This chain is Deoxyguanosinetriphosphate triphosphohydrolase-like protein 1, found in Vibrio cholerae serotype O1 (strain ATCC 39315 / El Tor Inaba N16961).